Reading from the N-terminus, the 377-residue chain is Nitric oxide reductase FlRd-NAD(+) reductase (377 aa).

Belongs to the FAD-dependent oxidoreductase family. Requires FAD as cofactor.

It is found in the cytoplasm. The catalysed reaction is 2 reduced [nitric oxide reductase rubredoxin domain] + NAD(+) + H(+) = 2 oxidized [nitric oxide reductase rubredoxin domain] + NADH. The protein operates within nitrogen metabolism; nitric oxide reduction. In terms of biological role, one of at least two accessory proteins for anaerobic nitric oxide (NO) reductase. Reduces the rubredoxin moiety of NO reductase. The chain is Nitric oxide reductase FlRd-NAD(+) reductase from Escherichia coli O9:H4 (strain HS).